The sequence spans 252 residues: tRNA (guanine-N(1)-)-methyltransferase (252 aa).

S-adenosyl-L-methionine-binding positions include Gly113 and 133 to 138 (IGDYVL).

It belongs to the RNA methyltransferase TrmD family. Homodimer.

It localises to the cytoplasm. It catalyses the reaction guanosine(37) in tRNA + S-adenosyl-L-methionine = N(1)-methylguanosine(37) in tRNA + S-adenosyl-L-homocysteine + H(+). Functionally, specifically methylates guanosine-37 in various tRNAs. This chain is tRNA (guanine-N(1)-)-methyltransferase, found in Nitrosococcus oceani (strain ATCC 19707 / BCRC 17464 / JCM 30415 / NCIMB 11848 / C-107).